The chain runs to 102 residues: Thioredoxin (102 aa).

The Thioredoxin domain maps to 2–102; the sequence is LHIDELTFEN…ILIHTINKYL (101 aa). Active-site nucleophile residues include cysteine 29 and cysteine 32. A disulfide bond links cysteine 29 and cysteine 32.

This sequence belongs to the thioredoxin family.

The protein resides in the plastid. The protein localises to the chloroplast. In terms of biological role, participates in various redox reactions through the reversible oxidation of its active center dithiol to a disulfide and catalyzes dithiol-disulfide exchange reactions. The polypeptide is Thioredoxin (trxA) (Cyanidioschyzon merolae (strain NIES-3377 / 10D) (Unicellular red alga)).